Consider the following 459-residue polypeptide: ATP synthase subunit beta (459 aa).

148-155 contacts ATP; it reads GGAGVGKT.

The protein belongs to the ATPase alpha/beta chains family. As to quaternary structure, F-type ATPases have 2 components, CF(1) - the catalytic core - and CF(0) - the membrane proton channel. CF(1) has five subunits: alpha(3), beta(3), gamma(1), delta(1), epsilon(1). CF(0) has three main subunits: a(1), b(2) and c(9-12). The alpha and beta chains form an alternating ring which encloses part of the gamma chain. CF(1) is attached to CF(0) by a central stalk formed by the gamma and epsilon chains, while a peripheral stalk is formed by the delta and b chains.

The protein resides in the cell inner membrane. It catalyses the reaction ATP + H2O + 4 H(+)(in) = ADP + phosphate + 5 H(+)(out). Its function is as follows. Produces ATP from ADP in the presence of a proton gradient across the membrane. The catalytic sites are hosted primarily by the beta subunits. The chain is ATP synthase subunit beta from Thioalkalivibrio sulfidiphilus (strain HL-EbGR7).